Here is a 140-residue protein sequence, read N- to C-terminus: Lymphocyte antigen 6H (140 aa).

The N-terminal stretch at 1–25 (MLPAAMKGLGLVLLAALLCSSPAHG) is a signal peptide. A UPAR/Ly6 domain is found at 26–91 (LWCQDCTLTT…RHFFSDYLMG (66 aa)). 5 disulfide bridges follow: Cys28/Cys52, Cys31/Cys40, Cys45/Cys73, Cys77/Cys104, and Cys105/Cys110. A glycan (N-linked (GlcNAc...) asparagine) is linked at Asn36.

The protein resides in the cell membrane. In Bos taurus (Bovine), this protein is Lymphocyte antigen 6H (LY6H).